We begin with the raw amino-acid sequence, 699 residues long: Lutropin-choriogonadotropic hormone receptor (699 aa).

The N-terminal stretch at methionine 1–arginine 26 is a signal peptide. The 40-residue stretch at glutamate 27–serine 66 folds into the LRRNT domain. Residues glutamate 27–arginine 363 lie on the Extracellular side of the membrane. LRR repeat units lie at residues asparagine 96–glutamate 115, arginine 124–phenylalanine 145, and serine 149–glycine 171. A glycan (N-linked (GlcNAc...) asparagine) is linked at asparagine 99. 2 N-linked (GlcNAc...) asparagine glycosylation sites follow: asparagine 174 and asparagine 195. LRR repeat units follow at residues glutamate 175 to glycine 196, threonine 198 to glycine 220, and glycine 223 to serine 244. Residues asparagine 291, asparagine 299, and asparagine 313 are each glycosylated (N-linked (GlcNAc...) asparagine). Tyrosine 331 is modified (sulfotyrosine). Residues valine 364–leucine 385 traverse the membrane as a helical segment. Topologically, residues threonine 386–arginine 395 are cytoplasmic. A helical membrane pass occupies residues phenylalanine 396–alanine 416. Topologically, residues serine 417–cysteine 439 are extracellular. Residues cysteine 439 and cysteine 514 are joined by a disulfide bond. A helical membrane pass occupies residues serine 440–leucine 462. Residues glutamate 463 to histidine 482 lie on the Cytoplasmic side of the membrane. A helical transmembrane segment spans residues alanine 483–valine 505. The Extracellular segment spans residues serine 506–glutamine 525. The chain crosses the membrane as a helical span at residues valine 526 to isoleucine 549. Residues tyrosine 550 to lysine 570 are Cytoplasmic-facing. Residues methionine 571–phenylalanine 594 form a helical membrane-spanning segment. Residues lysine 595 to lysine 605 are Extracellular-facing. A helical transmembrane segment spans residues valine 606–threonine 627. At lysine 628 to cysteine 699 the chain is on the cytoplasmic side. Residues cysteine 643 and cysteine 644 are each lipidated (S-palmitoyl cysteine).

This sequence belongs to the G-protein coupled receptor 1 family. FSH/LSH/TSH subfamily. Post-translationally, sulfated. As to expression, gonadal and thyroid cells.

It is found in the cell membrane. Receptor for lutropin-choriogonadotropic hormone. The activity of this receptor is mediated by G proteins which activate adenylate cyclase. The polypeptide is Lutropin-choriogonadotropic hormone receptor (LHCGR) (Homo sapiens (Human)).